The following is a 226-amino-acid chain: Cytidylate kinase (226 aa).

Gly-11–Thr-19 is a binding site for ATP.

Belongs to the cytidylate kinase family. Type 1 subfamily.

It is found in the cytoplasm. The enzyme catalyses CMP + ATP = CDP + ADP. It carries out the reaction dCMP + ATP = dCDP + ADP. The chain is Cytidylate kinase from Pediococcus pentosaceus (strain ATCC 25745 / CCUG 21536 / LMG 10740 / 183-1w).